The chain runs to 182 residues: Glycoprotein Q2 (182 aa).

The N-terminal stretch at 1 to 20 is a signal peptide; sequence MHFVAVYILTHFHAYPGVAA. N-linked (GlcNAc...) asparagine; by host glycosylation is found at asparagine 74 and asparagine 110.

In terms of assembly, interacts with isoform gQ2. The heterodimer gQ1-gQ2 associates with the glycoprotein complex gH-gL to form a tetrameric complex. The gH/gL/gQ1/gQ2 complex binds to host TNFRSF4. In terms of processing, glycosylated by host.

The protein resides in the virion membrane. Its subcellular location is the host endoplasmic reticulum-Golgi intermediate compartment. Functionally, plays a role in virus entry by participating in host receptor binding at the cell surface. In Human herpesvirus 6B (strain Z29) (HHV-6 variant B), this protein is Glycoprotein Q2.